Consider the following 191-residue polypeptide: Protein GrpE (191 aa).

Composition is skewed to basic and acidic residues over residues 1 to 19 (MKDE…EPES) and 29 to 42 (QQGE…EKEC). A disordered region spans residues 1 to 42 (MKDEHNQEHDHLSQKEPESYQKACACKEQQGEEKQEASEKEC).

It belongs to the GrpE family. Homodimer.

It localises to the cytoplasm. Its function is as follows. Participates actively in the response to hyperosmotic and heat shock by preventing the aggregation of stress-denatured proteins, in association with DnaK and GrpE. It is the nucleotide exchange factor for DnaK and may function as a thermosensor. Unfolded proteins bind initially to DnaJ; upon interaction with the DnaJ-bound protein, DnaK hydrolyzes its bound ATP, resulting in the formation of a stable complex. GrpE releases ADP from DnaK; ATP binding to DnaK triggers the release of the substrate protein, thus completing the reaction cycle. Several rounds of ATP-dependent interactions between DnaJ, DnaK and GrpE are required for fully efficient folding. The chain is Protein GrpE from Helicobacter pylori (strain HPAG1).